An 800-amino-acid polypeptide reads, in one-letter code: DNA topoisomerase 4 subunit A (800 aa).

The Topo IIA-type catalytic domain maps to 31 to 495 (LPDVRDGLKP…EIEEIKIDKE (465 aa)). Tyr119 (O-(5'-phospho-DNA)-tyrosine intermediate) is an active-site residue.

The protein belongs to the type II topoisomerase GyrA/ParC subunit family. ParC type 2 subfamily. In terms of assembly, heterotetramer composed of ParC and ParE.

It is found in the cell membrane. It catalyses the reaction ATP-dependent breakage, passage and rejoining of double-stranded DNA.. Topoisomerase IV is essential for chromosome segregation. It relaxes supercoiled DNA. Performs the decatenation events required during the replication of a circular DNA molecule. This chain is DNA topoisomerase 4 subunit A, found in Staphylococcus aureus (strain MW2).